A 169-amino-acid chain; its full sequence is UPF0303 protein BOV_1367 (169 aa).

This sequence belongs to the UPF0303 family.

In Brucella ovis (strain ATCC 25840 / 63/290 / NCTC 10512), this protein is UPF0303 protein BOV_1367.